The primary structure comprises 211 residues: Dephospho-CoA kinase (211 aa).

The DPCK domain occupies Val3 to Ala206. Position 11–16 (Ala11–Thr16) interacts with ATP.

It belongs to the CoaE family.

The protein localises to the cytoplasm. It catalyses the reaction 3'-dephospho-CoA + ATP = ADP + CoA + H(+). It participates in cofactor biosynthesis; coenzyme A biosynthesis; CoA from (R)-pantothenate: step 5/5. Catalyzes the phosphorylation of the 3'-hydroxyl group of dephosphocoenzyme A to form coenzyme A. This chain is Dephospho-CoA kinase, found in Anaeromyxobacter dehalogenans (strain 2CP-C).